The chain runs to 278 residues: NAD-capped RNA hydrolase NudC (278 aa).

Arg84 provides a ligand contact to substrate. Cys114 and Cys117 together coordinate Zn(2+). Residue Glu127 coordinates substrate. Position 132 (Cys132) interacts with Zn(2+). Position 140 (Tyr140) interacts with substrate. The 124-residue stretch at 141-264 (PRISPSMIVL…SIARYLIEAY (124 aa)) folds into the Nudix hydrolase domain. 3 residues coordinate a divalent metal cation: Ala174, Glu190, and Glu194. The short motif at 175–196 (GFVEPGESAEDCVHREVMEEVQ) is the Nudix box element. Residue 208 to 215 (QCWPFPHS) participates in substrate binding. Glu235 serves as a coordination point for a divalent metal cation. Residue Ala257 participates in substrate binding.

It belongs to the Nudix hydrolase family. NudC subfamily. As to quaternary structure, homodimer. Mg(2+) is required as a cofactor. Mn(2+) serves as cofactor. Requires Zn(2+) as cofactor.

The enzyme catalyses a 5'-end NAD(+)-phospho-ribonucleoside in mRNA + H2O = a 5'-end phospho-adenosine-phospho-ribonucleoside in mRNA + beta-nicotinamide D-ribonucleotide + 2 H(+). It catalyses the reaction NAD(+) + H2O = beta-nicotinamide D-ribonucleotide + AMP + 2 H(+). It carries out the reaction NADH + H2O = reduced beta-nicotinamide D-ribonucleotide + AMP + 2 H(+). MRNA decapping enzyme that specifically removes the nicotinamide adenine dinucleotide (NAD) cap from a subset of mRNAs by hydrolyzing the diphosphate linkage to produce nicotinamide mononucleotide (NMN) and 5' monophosphate mRNA. The NAD-cap is present at the 5'-end of some mRNAs and stabilizes RNA against 5'-processing. Has preference for mRNAs with a 5'-end purine. Catalyzes the hydrolysis of a broad range of dinucleotide pyrophosphates. The chain is NAD-capped RNA hydrolase NudC from Pseudomonas syringae pv. tomato (strain ATCC BAA-871 / DC3000).